The following is a 382-amino-acid chain: Anhydro-N-acetylmuramic acid kinase (382 aa).

Position 9 to 16 (9 to 16 (GTSLDGID)) interacts with ATP.

It belongs to the anhydro-N-acetylmuramic acid kinase family.

It carries out the reaction 1,6-anhydro-N-acetyl-beta-muramate + ATP + H2O = N-acetyl-D-muramate 6-phosphate + ADP + H(+). The protein operates within amino-sugar metabolism; 1,6-anhydro-N-acetylmuramate degradation. Its pathway is cell wall biogenesis; peptidoglycan recycling. Its function is as follows. Catalyzes the specific phosphorylation of 1,6-anhydro-N-acetylmuramic acid (anhMurNAc) with the simultaneous cleavage of the 1,6-anhydro ring, generating MurNAc-6-P. Is required for the utilization of anhMurNAc either imported from the medium or derived from its own cell wall murein, and thus plays a role in cell wall recycling. The polypeptide is Anhydro-N-acetylmuramic acid kinase (Bacillus cereus (strain AH820)).